A 498-amino-acid polypeptide reads, in one-letter code: ATP synthase subunit beta, chloroplastic (498 aa).

172–179 (GGAGVGKT) provides a ligand contact to ATP.

Belongs to the ATPase alpha/beta chains family. F-type ATPases have 2 components, CF(1) - the catalytic core - and CF(0) - the membrane proton channel. CF(1) has five subunits: alpha(3), beta(3), gamma(1), delta(1), epsilon(1). CF(0) has four main subunits: a(1), b(1), b'(1) and c(9-12).

The protein localises to the plastid. It localises to the chloroplast thylakoid membrane. The catalysed reaction is ATP + H2O + 4 H(+)(in) = ADP + phosphate + 5 H(+)(out). In terms of biological role, produces ATP from ADP in the presence of a proton gradient across the membrane. The catalytic sites are hosted primarily by the beta subunits. The chain is ATP synthase subunit beta, chloroplastic from Lolium perenne (Perennial ryegrass).